Consider the following 224-residue polypeptide: MSIKHWPEQERPREKLIQQGAGALSDSELLAIFLRTGTQGISAVELARQLLAQFGGLRSLMSASREEFCQGLGLGDAKYTQLQAVLEMSKRHLQEQLMRETVFASAEHVRTYLSSQLRHSPREVFAVLFLDTQHRLIRYQELFMGTIDAAAVYPREVVKAALQYNAAAVILAHNHPSGIAEPSQADISITDKIKRALDLVDVRLLDHFVVGDGLPVSLAERGLV.

An MPN domain is found at Val102–Val224. Residues His173, His175, and Asp186 each contribute to the Zn(2+) site. The short motif at His173–Asp186 is the JAMM motif element.

This sequence belongs to the UPF0758 family.

The polypeptide is UPF0758 protein Mmwyl1_0624 (Marinomonas sp. (strain MWYL1)).